The primary structure comprises 300 residues: tRNA uridine(34) hydroxylase (300 aa).

The Rhodanese domain occupies 128–222 (ADPEVIVVDT…YLEDVPQAQS (95 aa)). The active-site Cysteine persulfide intermediate is the Cys-182.

It belongs to the TrhO family.

It catalyses the reaction uridine(34) in tRNA + AH2 + O2 = 5-hydroxyuridine(34) in tRNA + A + H2O. Catalyzes oxygen-dependent 5-hydroxyuridine (ho5U) modification at position 34 in tRNAs. The chain is tRNA uridine(34) hydroxylase from Deinococcus radiodurans (strain ATCC 13939 / DSM 20539 / JCM 16871 / CCUG 27074 / LMG 4051 / NBRC 15346 / NCIMB 9279 / VKM B-1422 / R1).